A 91-amino-acid polypeptide reads, in one-letter code: Transcription factor ILI3 (91 aa).

In terms of domain architecture, bHLH spans 3–58 (SRRGGGGGGGRITDEEINELISKLQALLPESSRSRGASRSSASKLLKETCSYIKSL).

Belongs to the bHLH protein family.

Atypical and probable non DNA-binding bHLH transcription that integrates multiple signaling pathways to regulate cell elongation and plant development. This is Transcription factor ILI3 (ILI3) from Oryza sativa subsp. indica (Rice).